A 318-amino-acid chain; its full sequence is Ribonuclease Z (318 aa).

Positions 63, 65, 67, 68, 142, 210, and 268 each coordinate Zn(2+). Asp-67 serves as the catalytic Proton acceptor.

It belongs to the RNase Z family. Homodimer. Zn(2+) serves as cofactor.

It catalyses the reaction Endonucleolytic cleavage of RNA, removing extra 3' nucleotides from tRNA precursor, generating 3' termini of tRNAs. A 3'-hydroxy group is left at the tRNA terminus and a 5'-phosphoryl group is left at the trailer molecule.. Zinc phosphodiesterase, which displays some tRNA 3'-processing endonuclease activity. Probably involved in tRNA maturation, by removing a 3'-trailer from precursor tRNA. This Thermobifida fusca (strain YX) protein is Ribonuclease Z.